The sequence spans 483 residues: Glycogen synthase (483 aa).

Residue Lys-15 participates in ADP-alpha-D-glucose binding.

The protein belongs to the glycosyltransferase 1 family. Bacterial/plant glycogen synthase subfamily.

The enzyme catalyses [(1-&gt;4)-alpha-D-glucosyl](n) + ADP-alpha-D-glucose = [(1-&gt;4)-alpha-D-glucosyl](n+1) + ADP + H(+). The protein operates within glycan biosynthesis; glycogen biosynthesis. Functionally, synthesizes alpha-1,4-glucan chains using ADP-glucose. This chain is Glycogen synthase, found in Exiguobacterium sibiricum (strain DSM 17290 / CCUG 55495 / CIP 109462 / JCM 13490 / 255-15).